Reading from the N-terminus, the 526-residue chain is GFPGEKGPSGEAGTAGPPGTPGPQGLLGAPGILGLPGSRGERGLPGVAGALGEPGPLGIAGPPGARGPPGAVGSPGVNGAPGEAGRDGNPGSDGPPGRDGQPGHKGERGYPGNAGPVGAAGAPGPQGSVGPTGKHGNRGEPGPAGSIGPVGAAGPRGPSGPQGIRGDKGEPGDKGPRGLPGIKGHNGLQGLPGLAGQHGDQGAPGAVGPAGPRGPAGPTGPAGKDGRSGHPGTVGPAGLRGSQGSQGPAGPPGPPGPPGPPGASGGGYDFGYDGDFYRADQPRSPPSLRPKDYEVDATLKSLNNQIETLLTPEGSRKNPARTCRDLRLSHPEWSSGYYWIDPNQGCTMDAIKVYCDFSTGETCIRAQPENISVKNWYKSSKAKKHVWLGETINGGTQFEYNVEGVTSKEMATQLAFMRLLANHASQNITYHCKNSIAYMDEETGNLNKAVILQGSNDVELVAEGNSRFTYTVLVDGCTKKTNEWGKTIIEYKTNKPSRLPFLDIAPLDIGGADQEFYVDVGPVCFK.

A disordered region spans residues 1–291 (GFPGEKGPSG…PRSPPSLRPK (291 aa)). 3 stretches are compositionally biased toward low complexity: residues 9–36 (SGEAGTAGPPGTPGPQGLLGAPGILGLP), 44–81 (LPGVAGALGEPGPLGIAGPPGARGPPGAVGSPGVNGAP), and 110–131 (YPGNAGPVGAAGAPGPQGSVGP). The span at 165 to 176 (RGDKGEPGDKGP) shows a compositional bias: basic and acidic residues. Positions 249 to 261 (AGPPGPPGPPGPP) are enriched in pro residues. The propeptide at 263–526 (ASGGGYDFGY…YVDVGPVCFK (264 aa)) is C-terminal propeptide. Positions 293–526 (YEVDATLKSL…YVDVGPVCFK (234 aa)) constitute a Fibrillar collagen NC1 domain. Disulfide bonds link cysteine 323/cysteine 355, cysteine 363/cysteine 524, and cysteine 432/cysteine 477. Residues aspartate 341, asparagine 343, glutamine 344, cysteine 346, and aspartate 349 each coordinate Ca(2+).

Belongs to the fibrillar collagen family. Trimers of one alpha 2(I) and two alpha 1(I) chains. Interacts (via C-terminus) with TMEM131 (via PapD-L domain); the interaction is direct and is involved in assembly and TRAPPIII ER-to-Golgi transport complex-dependent secretion of collagen. Post-translationally, prolines at the third position of the tripeptide repeating unit (G-X-Y) are hydroxylated in some or all of the chains. As to expression, forms the fibrils of tendon, ligaments and bones. In bones the fibrils are mineralized with calcium hydroxyapatite.

The protein resides in the secreted. It is found in the extracellular space. It localises to the extracellular matrix. In terms of biological role, type I collagen is a member of group I collagen (fibrillar forming collagen). The sequence is that of Collagen alpha-2(I) chain (COL1A2) from Oryctolagus cuniculus (Rabbit).